The following is a 103-amino-acid chain: Large ribosomal subunit protein uL24 (103 aa).

The protein belongs to the universal ribosomal protein uL24 family. As to quaternary structure, part of the 50S ribosomal subunit.

Functionally, one of two assembly initiator proteins, it binds directly to the 5'-end of the 23S rRNA, where it nucleates assembly of the 50S subunit. One of the proteins that surrounds the polypeptide exit tunnel on the outside of the subunit. This is Large ribosomal subunit protein uL24 from Lacticaseibacillus casei (strain BL23) (Lactobacillus casei).